Reading from the N-terminus, the 289-residue chain is MSRLNQILKDYPLLEATTSEIESMESSLADDVITSNDDEIQSVSPQYYLRDMFKASITEGPDDDFPPVPEVENDIILDDDEEYDGYKVDFAEARPWTALTQKNIDGRMNLELMAPENLTDAQYKQWVESVSSIMTISRQIRLHQAEIMDTSSGLLIIENMIPSIGRTSEFKSIPEHIPPSPTSDHTTPPSSLRSDTPSQTSSSSMGLPDVSSASDWSGMINKKIRIPPVVSSKSPYEFTLSDLYGSNQAALDYLSGSGMDLRTAVCSGLKQRGIYNRIRIQYKITPEFV.

Position 11 is a phosphotyrosine (Tyr11). The segment at 170–211 is disordered; that stretch reads FKSIPEHIPPSPTSDHTTPPSSLRSDTPSQTSSSSMGLPDVS. The segment covering 182-204 has biased composition (low complexity); that stretch reads TSDHTTPPSSLRSDTPSQTSSSS. Ser246 is modified (phosphoserine; by host).

The protein belongs to the vesiculovirus protein P family. Homodimer. Interacts with the L polymerase; the association of P and L forms the polymerase complex and positions P optimally for encapsidation of newly synthesized genomes with the nucleoprotein. Interacts (via N-terminus) with N(0). Interacts (via C-terminus) with N in ribonucleocapsid (via C-terminus); this interaction allows to package the L polymerase in the virion and positions the polymerase on the template, since P acts as a bridge between N and L.

The protein resides in the virion. Its subcellular location is the host cytoplasm. Functionally, nonenzymatic cofactor regulating the function and conformation of the RNA polymerase and part of the transcription and replication complex. Binds the viral ribonucleocapsid and positions the L polymerase on the template. Acts as a chaperone for newly synthesized free N protein, so-called N(0). Plays a role in virion assembly. The polypeptide is Phosphoprotein (P) (Gerbillinae (gerbils)).